An 82-amino-acid polypeptide reads, in one-letter code: U17-hexatoxin-Hi1a (82 aa).

An N-terminal signal peptide occupies residues 1-21; that stretch reads MKTIFAVTLLLFAIYVPECMP. Intrachain disulfides connect Cys22–Cys33, Cys27–Cys48, Cys32–Cys61, Cys58–Cys69, and Cys63–Cys75.

In terms of tissue distribution, expressed by the venom gland.

It localises to the secreted. Its function is as follows. Probable ion channel inhibitor. The protein is U17-hexatoxin-Hi1a of Hadronyche infensa (Fraser island funnel-web spider).